Here is a 385-residue protein sequence, read N- to C-terminus: Probable thioesterase PNKD (385 aa).

A compositionally biased stretch (polar residues) spans 31-42 (NKASQNRSRALQ). Residues 31 to 57 (NKASQNRSRALQSHSSPECKEEPEPLS) are disordered. Positions 172, 174, 176, 177, 229, 253, and 291 each coordinate Zn(2+).

Belongs to the metallo-beta-lactamase superfamily. Glyoxalase II family. Zn(2+) serves as cofactor. In terms of processing, undergoes cleavage at the N-terminus.

The protein resides in the cell membrane. It is found in the mitochondrion. The catalysed reaction is a thioester + H2O = a thiol + a carboxylate + H(+). Functionally, probable thioesterase that may play a role in cellular detoxification processes; it likely acts on a yet-unknown alpha-hydroxythioester substrate. In vitro, it is able to catalyze the hydrolysis of S-D-lactoyl-glutathione to form glutathione and D-lactic acid at very low rate, though this reaction is not physiologically relevant in vivo. The chain is Probable thioesterase PNKD (PNKD) from Bos taurus (Bovine).